Consider the following 496-residue polypeptide: Serine/threonine-protein kinase Sgk3 (496 aa).

The 113-residue stretch at 12 to 124 (SCPSVSIPSS…AFLQMDSPRH (113 aa)) folds into the PX domain. The disordered stretch occupies residues 121–157 (SPRHQSDPSEDEDERSTPKPHSTSRNINLGPTGNPHA). Phosphoserine is present on residues Ser-126 and Ser-129. Over residues 139-151 (KPHSTSRNINLGP) the composition is skewed to polar residues. In terms of domain architecture, Protein kinase spans 162–464 (FDFLKVIGKG…EETVPYSVCV (303 aa)). ATP contacts are provided by residues 168 to 176 (IGKGSFGKV) and Lys-191. The short motif at 195-205 (KKIVLNRKEQK) is the Nuclear localization signal element. Asp-286 (proton acceptor) is an active-site residue. Thr-320 carries the phosphothreonine; by PDPK1 modification. Positions 420–496 (ESLSWTDLVQ…YAPPSEDLFL (77 aa)) constitute an AGC-kinase C-terminal domain. Ser-486 carries the post-translational modification Phosphoserine.

It belongs to the protein kinase superfamily. AGC Ser/Thr protein kinase family. Interacts with GSK3B and FLII. Interacts with PDPK1 in a phosphorylation-dependent manner. Activated by phosphorylation on Ser-486 by an unknown kinase (may be mTORC2 but not confirmed), transforming it into a substrate for PDPK1 which then phosphorylates it on Thr-320.

The protein resides in the cytoplasmic vesicle. It is found in the early endosome. Its subcellular location is the recycling endosome. It carries out the reaction L-seryl-[protein] + ATP = O-phospho-L-seryl-[protein] + ADP + H(+). It catalyses the reaction L-threonyl-[protein] + ATP = O-phospho-L-threonyl-[protein] + ADP + H(+). Two specific sites, one in the kinase domain (Thr-320) and the other in the C-terminal regulatory region (Ser-486), need to be phosphorylated for its full activation. In terms of biological role, serine/threonine-protein kinase which is involved in the regulation of a wide variety of ion channels, membrane transporters, cell growth, proliferation, survival and migration. Up-regulates Na(+) channels: SCNN1A/ENAC and SCN5A, K(+) channels: KCNA3/KV1.3, KCNE1, KCNQ1 and KCNH2/HERG, epithelial Ca(2+) channels: TRPV5 and TRPV6, chloride channel: BSND, creatine transporter: SLC6A8, Na(+)/dicarboxylate cotransporter: SLC13A2/NADC1, Na(+)-dependent phosphate cotransporter: SLC34A2/NAPI-2B, amino acid transporters: SLC1A5/ASCT2 and SLC6A19, glutamate transporters: SLC1A3/EAAT1, SLC1A6/EAAT4 and SLC1A7/EAAT5, glutamate receptors: GRIA1/GLUR1 and GRIK2/GLUR6, Na(+)/H(+) exchanger: SLC9A3/NHE3, and the Na(+)/K(+) ATPase. Plays a role in the regulation of renal tubular phosphate transport and bone density. Phosphorylates NEDD4L and GSK3B. Positively regulates ER transcription activity through phosphorylation of FLII. Negatively regulates the function of ITCH/AIP4 via its phosphorylation and thereby prevents CXCR4 from being efficiently sorted to lysosomes. In Rattus norvegicus (Rat), this protein is Serine/threonine-protein kinase Sgk3 (Sgk3).